A 215-amino-acid chain; its full sequence is Cytochrome b6 (215 aa).

The chain crosses the membrane as a helical span at residues 32–52; that stretch reads IFYCLGGITLTCFLVQVATGF. Cys35 is a binding site for heme c. His86 and His100 together coordinate heme b. 3 consecutive transmembrane segments (helical) span residues 90-110, 116-136, and 186-206; these read ASMMVLMMILHVFRVYLTGGF, LTWVTGVVLAVLTASFGVTGY, and LHTFVLPLLTAVFMLMHFLMI. Heme b is bound by residues His187 and His202.

This sequence belongs to the cytochrome b family. PetB subfamily. The 4 large subunits of the cytochrome b6-f complex are cytochrome b6, subunit IV (17 kDa polypeptide, PetD), cytochrome f and the Rieske protein, while the 4 small subunits are PetG, PetL, PetM and PetN. The complex functions as a dimer. Heme b is required as a cofactor. It depends on heme c as a cofactor.

Its subcellular location is the plastid. The protein resides in the chloroplast thylakoid membrane. In terms of biological role, component of the cytochrome b6-f complex, which mediates electron transfer between photosystem II (PSII) and photosystem I (PSI), cyclic electron flow around PSI, and state transitions. The polypeptide is Cytochrome b6 (Nicotiana tabacum (Common tobacco)).